A 324-amino-acid polypeptide reads, in one-letter code: T-cell acute lymphocytic leukemia protein 1 homolog (324 aa).

Residues 1-49 (MMEKLKSEQFPLSPSAEGCASPPRGDGDARGKQEGTTAETGEHRLPEEL) are disordered. The 53-residue stretch at 185 to 237 (VRRIFTNSRERWRQQNVNGAFAELRKLIPTHPPDKKLSKNEILRLAMKYINFL) folds into the bHLH domain. The interval 276 to 324 (SPNSSCGSLLDGDASPESFTEDQDSSVESRPSARGLHHSSLPLDGNAQR) is disordered.

Expressed in hemopoietic and endothelial lineages. Isoform beta emerges first, expressing in the entire anterior and posterior lateral mesoderm (ALM and PLM respectively), and in the ventral wall of the dorsal aorta, where definitive hemopoiesis begins. Isoform alpha expresses later as two pairs of stripes in the PLM and ALM, and becomes restricted to the intermediate cell mass (ICM) by the 18-somite stage. The ICM is the key site of primitive hemopoiesis, giving rise to the erythroid lineage. Also expressed in all stages of endocardial cell migration and in the developing midbrain, hindbrain and spinal cord. In adults, expressed in the main hemopoietic organs, namely the kidney (where isoform alpha is the predominant isoform) and the spleen. Also expressed in the liver, gill and gonads.

It localises to the nucleus. Functionally, transcription factor that plays a pivotal role in hemopoietic and endothelial development, acting synergistically with lmo2 and downstream of clo. Specifies mesodermal precursors to a hemangioblast cell fate. Hemangioblasts are bipotential precursors of blood and endothelium, and in the absence of hemopoietic induction cues such as gata1, tal1/scl-lmo2-induced hemangioblasts differentiate into endothelial cells. Isoform alpha and isoform beta are redundant for the initiation of primitive hemopoiesis but have distinct roles in the regulation of primitive erythroid differentiation and definitive hemopoietic stem cell specification, most likely due to differences in expression levels. Specification of definitive hemopoietic stem cells requires isoform beta. DNA binding is required for erythroid maturation, but not for its other hemopoietic functions. Endothelial roles include development of the dorsal aorta, the site of definitive hemopoiesis in the embryo. Required for angiogenesis but not angioblast specification. Has an additional role in endocardium formation during heart development. May play a role in central nervous system development. This is T-cell acute lymphocytic leukemia protein 1 homolog from Danio rerio (Zebrafish).